We begin with the raw amino-acid sequence, 743 residues long: Probable TonB-dependent receptor BfrD (743 aa).

An N-terminal signal peptide occupies residues 1–30; it reads MKFYSSHPMPESLAAAIAVPLLGLLPAAQA. The TBDR plug domain occupies 62–168; that stretch reads PLADTPRTVQ…AGGSINLVTK (107 aa). In terms of domain architecture, TBDR beta-barrel spans 173–743; the sequence is QDFTEVQAGI…SAMLTFKLSY (571 aa). Positions 726–743 match the TonB C-terminal box motif; it reads YAALGPGRSAMLTFKLSY.

The protein belongs to the TonB-dependent receptor family.

It localises to the cell outer membrane. Probably involved in iron transport. The chain is Probable TonB-dependent receptor BfrD (bfrD) from Bordetella pertussis (strain Tohama I / ATCC BAA-589 / NCTC 13251).